The sequence spans 333 residues: Gap junction alpha-4 protein (333 aa).

The Cytoplasmic portion of the chain corresponds to 1–20 (MGDWGFLEKLLDQVQEHSTV). Residues 21–40 (VGKIWLTVLFIFRILILGLA) form a helical membrane-spanning segment. The Extracellular portion of the chain corresponds to 41-76 (GESVWGDEQSDFECNTAQPGCTNVCYDQAFPISHIR). A helical membrane pass occupies residues 77–99 (YWVLQFLFVSTPTLVYLGHVIYL). At 100 to 148 (SRREERLRQKEGELRALPAKDPRVERALASIERQMAKISVAEDGHLRIR) the chain is on the cytoplasmic side. The helical transmembrane segment at 149 to 165 (GALMGTYVASVLCKSVL) threads the bilayer. Residues 166 to 207 (EAGFLYGQWRLYGWTMEPVFVCQRSPCPYLVDCFVSRPTEKT) lie on the Extracellular side of the membrane. The chain crosses the membrane as a helical span at residues 208 to 230 (IFIIFMLVVGLISLVLNLLELAY). Over 231-333 (LLCRCLSRGV…SSSASKKQYV (103 aa)) the chain is Cytoplasmic. Positions 303–333 (SRAPLFLDPPPQTGRKSPSRPSSSASKKQYV) are disordered. Over residues 317–333 (RKSPSRPSSSASKKQYV) the composition is skewed to low complexity.

Belongs to the connexin family. Alpha-type (group II) subfamily. In terms of assembly, a connexon is composed of a hexamer of connexins.

It localises to the cell membrane. The protein localises to the cell junction. The protein resides in the gap junction. In terms of biological role, one gap junction consists of a cluster of closely packed pairs of transmembrane channels, the connexons, through which materials of low MW diffuse from one cell to a neighboring cell. This chain is Gap junction alpha-4 protein (GJA4), found in Bos taurus (Bovine).